A 209-amino-acid chain; its full sequence is Uracil phosphoribosyltransferase (209 aa).

5-phospho-alpha-D-ribose 1-diphosphate contacts are provided by residues arginine 79, arginine 104, and 131 to 139 (DPMLATGGS). Uracil contacts are provided by residues isoleucine 194 and 199–201 (GDA). Aspartate 200 provides a ligand contact to 5-phospho-alpha-D-ribose 1-diphosphate.

This sequence belongs to the UPRTase family. It depends on Mg(2+) as a cofactor.

The catalysed reaction is UMP + diphosphate = 5-phospho-alpha-D-ribose 1-diphosphate + uracil. The protein operates within pyrimidine metabolism; UMP biosynthesis via salvage pathway; UMP from uracil: step 1/1. Its activity is regulated as follows. Allosterically activated by GTP. Its function is as follows. Catalyzes the conversion of uracil and 5-phospho-alpha-D-ribose 1-diphosphate (PRPP) to UMP and diphosphate. In Macrococcus caseolyticus (strain JCSC5402) (Macrococcoides caseolyticum), this protein is Uracil phosphoribosyltransferase.